The sequence spans 65 residues: Toxin Cbo5 (65 aa).

An LCN-type CS-alpha/beta domain is found at 2–65 (KDGYLVDKTG…QTWPLPNKSC (64 aa)). Disulfide bonds link C12–C65, C16–C41, C25–C46, and C29–C48.

It belongs to the long (4 C-C) scorpion toxin superfamily. Sodium channel inhibitor family. Beta subfamily. As to expression, expressed by the venom gland.

Its subcellular location is the secreted. In terms of biological role, a probable toxin that has no activity on the tested sodium channels (when tested at 200 nM) and is not toxic to mice, crickets or sweet water shrimps. It resembles Beta toxins that bind voltage-independently at site-4 of sodium channels and shift the voltage of activation toward more negative potentials, thereby affecting sodium channel activation and promoting spontaneous and repetitive firing. This is Toxin Cbo5 from Centruroides bonito (Scorpion).